Here is a 530-residue protein sequence, read N- to C-terminus: Na(+)/H(+) antiporter NhaB (530 aa).

The next 12 helical transmembrane spans lie at 13 to 33, 98 to 118, 123 to 145, 149 to 166, 205 to 225, 238 to 258, 308 to 328, 330 to 350, 356 to 376, 393 to 413, 451 to 471, and 480 to 500; these read FLGK…IINP, LLLV…LFIF, LGIQ…LSAF, LTVI…YSIY, LLMH…VGEP, FGEF…CGIL, IAVW…LIGL, VIIL…GKAF, FTAL…QALF, LALF…VFVG, ATPN…APLI, and IMAL…IVFF.

Belongs to the NhaB Na(+)/H(+) (TC 2.A.34) antiporter family.

Its subcellular location is the cell inner membrane. It carries out the reaction 2 Na(+)(in) + 3 H(+)(out) = 2 Na(+)(out) + 3 H(+)(in). In terms of biological role, na(+)/H(+) antiporter that extrudes sodium in exchange for external protons. In Vibrio atlanticus (strain LGP32) (Vibrio splendidus (strain Mel32)), this protein is Na(+)/H(+) antiporter NhaB.